The chain runs to 248 residues: Triosephosphate isomerase (248 aa).

Substrate is bound at residue Asn-9–Lys-11. His-94 (electrophile) is an active-site residue. Glu-166 (proton acceptor) is an active-site residue. Substrate-binding positions include Gly-172, Ser-212, and Gly-233–Gly-234.

It belongs to the triosephosphate isomerase family. As to quaternary structure, homodimer.

It localises to the cytoplasm. It catalyses the reaction D-glyceraldehyde 3-phosphate = dihydroxyacetone phosphate. The protein operates within carbohydrate biosynthesis; gluconeogenesis. It functions in the pathway carbohydrate degradation; glycolysis; D-glyceraldehyde 3-phosphate from glycerone phosphate: step 1/1. Its function is as follows. Involved in the gluconeogenesis. Catalyzes stereospecifically the conversion of dihydroxyacetone phosphate (DHAP) to D-glyceraldehyde-3-phosphate (G3P). The polypeptide is Triosephosphate isomerase (Caldanaerobacter subterraneus subsp. tengcongensis (strain DSM 15242 / JCM 11007 / NBRC 100824 / MB4) (Thermoanaerobacter tengcongensis)).